The sequence spans 467 residues: Probable Xaa-Pro aminopeptidase pepP (467 aa).

Mn(2+)-binding residues include Asp264, Asp275, Glu398, and Glu438.

This sequence belongs to the peptidase M24B family. It depends on Mn(2+) as a cofactor.

It carries out the reaction Release of any N-terminal amino acid, including proline, that is linked to proline, even from a dipeptide or tripeptide.. Catalyzes the removal of a penultimate prolyl residue from the N-termini of peptides. This is Probable Xaa-Pro aminopeptidase pepP (pepP) from Neosartorya fischeri (strain ATCC 1020 / DSM 3700 / CBS 544.65 / FGSC A1164 / JCM 1740 / NRRL 181 / WB 181) (Aspergillus fischerianus).